Here is a 129-residue protein sequence, read N- to C-terminus: Small ribosomal subunit protein uS8mz (129 aa).

This sequence belongs to the universal ribosomal protein uS8 family. In terms of assembly, component of the mitochondrial ribosome small subunit.

It is found in the mitochondrion. This is Small ribosomal subunit protein uS8mz (RPS15AB) from Arabidopsis thaliana (Mouse-ear cress).